The sequence spans 68 residues: Molybdenum-pterin-binding protein 1 (68 aa).

Residues 2–68 (SISARNQLKG…IKSTDVMILA (67 aa)) enclose the Mop domain.

In terms of biological role, binds one mole of molybdenum per mole of protein and contains a pterin. This Clostridium pasteurianum protein is Molybdenum-pterin-binding protein 1 (mopI).